Here is a 291-residue protein sequence, read N- to C-terminus: MFFEFALIGTTASGKTELANKLAYEFNASILSLDSLCVYKQINIASAKTEQKTLDELDYFGINLLNVNEHFNIALFFEEYKKAKTFAQKNNQILIITGGTSFYLKALMDGLSENFKESQSTLSNDEIYHLMIKIDPQAKIEKNDTYRLKKWLGIYEQTNKIPSEVLKETKQEALIKKLDIFEISWQKDLLEKRIIKRTKNMLNEGLIEEAKMLFDNYDHHLKALNSIGLKECKDFLDKKINLNKLEELIIIHTRQLAKRQRTFNKKFNKENLDFQSAYENLKAYILKKYQG.

9 to 16 (GTTASGKT) provides a ligand contact to ATP. 11–16 (TASGKT) contacts substrate. The tract at residues 34–37 (DSLC) is interaction with substrate tRNA.

Belongs to the IPP transferase family. Monomer. It depends on Mg(2+) as a cofactor.

It catalyses the reaction adenosine(37) in tRNA + dimethylallyl diphosphate = N(6)-dimethylallyladenosine(37) in tRNA + diphosphate. Functionally, catalyzes the transfer of a dimethylallyl group onto the adenine at position 37 in tRNAs that read codons beginning with uridine, leading to the formation of N6-(dimethylallyl)adenosine (i(6)A). The polypeptide is tRNA dimethylallyltransferase (Campylobacter lari (strain RM2100 / D67 / ATCC BAA-1060)).